The following is a 2169-amino-acid chain: Protein sidekick-1 (2169 aa).

The N-terminal stretch at 1-50 (MVGRKVDREIIARRNSRRDGMMMKLNFCFFFCRRWWAFLLLQLHMLQALA) is a signal peptide. The Extracellular portion of the chain corresponds to 51-1961 (QDDVAPYFKT…TEAPFYEEWW (1911 aa)). Ig-like C2-type domains follow at residues 56-138 (PYFK…SEVQ), 143-229 (GNFM…SPLI), 245-333 (PIIV…AFIS), 338-428 (PYFT…LDVT), and 432-521 (PAFI…VMLT). Cys78 and Cys121 are oxidised to a cystine. Asn93, Asn223, and Asn253 each carry an N-linked (GlcNAc...) asparagine glycan. Cystine bridges form between Cys267/Cys314, Cys360/Cys410, and Cys453/Cys505. Residues Asn502, Asn524, and Asn534 are each glycosylated (N-linked (GlcNAc...) asparagine). The 91-residue stretch at 525-615 (RTFIVHPPEN…GNDSRMARLE (91 aa)) folds into the Ig-like C2-type 6 domain. A disulfide bridge connects residues Cys547 and Cys599. N-linked (GlcNAc...) asparagine glycosylation is found at Asn607, Asn631, Asn734, Asn773, Asn834, Asn967, and Asn977. Fibronectin type-III domains follow at residues 622–718 (SPQN…LPEE), 723–819 (PPKN…TLQG), 824–922 (PPQN…TLED), 926–1020 (AVGH…VPPE), 1024–1123 (APSN…TLQA), 1128–1226 (APGS…TRES), 1231–1328 (PPEN…TKDD), 1332–1426 (PPIR…TEKR), 1431–1528 (PPQQ…TLQD), 1533–1651 (PPSS…VGEA), 1656–1752 (APQN…THQA), 1756–1851 (APSF…AGPA), and 1854–1955 (SPGS…TEAP). Residues Asn1234 and Asn1285 are each glycosylated (N-linked (GlcNAc...) asparagine). A disordered region spans residues 1423-1443 (TEKRERPAPPQQLTTPQSDVS). The span at 1433 to 1443 (QQLTTPQSDVS) shows a compositional bias: polar residues. Asn1606, Asn1700, Asn1719, Asn1771, and Asn1845 each carry an N-linked (GlcNAc...) asparagine glycan. A helical transmembrane segment spans residues 1962-1982 (FLLVMALSSLILILLVVFALV). Residues 1983–2169 (LHGQSKKYKN…TPVTGFSSFV (187 aa)) lie on the Cytoplasmic side of the membrane. Disordered regions lie at residues 2028–2050 (TFSK…HYSD) and 2145–2169 (GGVY…SSFV). Polar residues predominate over residues 2160–2169 (TPVTGFSSFV). Positions 2163–2169 (TGFSSFV) match the PDZ-binding motif.

This sequence belongs to the sidekick family. Homodimer; mediates homophilic interactions to promote cell adhesion. Expressed by non-overlapping subsets of retinal neurons. SDK1, SDK2, DSCAM and DSCAML1 are expressed in non-overlapping subsets of interneurons and retinal ganglion cells (RGCs) that form synapses in distinct inner plexiform layer (IPL) sublaminae.

It localises to the cell membrane. It is found in the synapse. Functionally, adhesion molecule that promotes lamina-specific synaptic connections in the retina. Expressed in specific subsets of interneurons and retinal ganglion cells (RGCs) and promotes synaptic connectivity via homophilic interactions. The chain is Protein sidekick-1 from Gallus gallus (Chicken).